Here is a 99-residue protein sequence, read N- to C-terminus: Putative pterin-4-alpha-carbinolamine dehydratase (99 aa).

The protein belongs to the pterin-4-alpha-carbinolamine dehydratase family.

It carries out the reaction (4aS,6R)-4a-hydroxy-L-erythro-5,6,7,8-tetrahydrobiopterin = (6R)-L-erythro-6,7-dihydrobiopterin + H2O. The protein is Putative pterin-4-alpha-carbinolamine dehydratase of Aquifex aeolicus (strain VF5).